Consider the following 460-residue polypeptide: Fumarate hydratase class II (460 aa).

Substrate is bound by residues 95 to 97, 126 to 129, 136 to 138, and threonine 184; these read SGT, HPND, and SSN. Catalysis depends on histidine 185, which acts as the Proton donor/acceptor. Serine 315 is a catalytic residue. Substrate-binding positions include serine 316 and 321-323; that span reads KIN.

The protein belongs to the class-II fumarase/aspartase family. Fumarase subfamily. In terms of assembly, homotetramer.

Its subcellular location is the cytoplasm. It carries out the reaction (S)-malate = fumarate + H2O. It functions in the pathway carbohydrate metabolism; tricarboxylic acid cycle; (S)-malate from fumarate: step 1/1. Its function is as follows. Involved in the TCA cycle. Catalyzes the stereospecific interconversion of fumarate to L-malate. The protein is Fumarate hydratase class II of Chlamydia caviae (strain ATCC VR-813 / DSM 19441 / 03DC25 / GPIC) (Chlamydophila caviae).